The following is a 164-amino-acid chain: Decoration protein (164 aa).

Residues 1-72 form a binding to the capsid hexamer region; it reads MIDYSGLRTI…AIPPAPPAPP (72 aa). The region spanning 71–164 is the Ig-like domain; that stretch reads PPLTLSKDLT…VTVNPTVPGG (94 aa).

In terms of assembly, interacts with the major capsid protein; each hexon binds a single copy of the decoration protein.

It localises to the virion. Functionally, decoration protein that binds asymmetrically to the center of each capsid protein hexamer after capsid expansion. Stabilizes the capsid and protects from DNA release. The polypeptide is Decoration protein (Escherichia phage T5 (Enterobacteria phage T5)).